A 469-amino-acid polypeptide reads, in one-letter code: Glutamate--tRNA ligase (469 aa).

The 'HIGH' region motif lies at 9–19 (PSPTGFLHVGG). A 'KMSKS' region motif is present at residues 236–240 (KLSKR). Residue Lys-239 participates in ATP binding.

The protein belongs to the class-I aminoacyl-tRNA synthetase family. Glutamate--tRNA ligase type 1 subfamily. In terms of assembly, monomer.

Its subcellular location is the cytoplasm. The catalysed reaction is tRNA(Glu) + L-glutamate + ATP = L-glutamyl-tRNA(Glu) + AMP + diphosphate. Functionally, catalyzes the attachment of glutamate to tRNA(Glu) in a two-step reaction: glutamate is first activated by ATP to form Glu-AMP and then transferred to the acceptor end of tRNA(Glu). The protein is Glutamate--tRNA ligase of Shewanella amazonensis (strain ATCC BAA-1098 / SB2B).